The following is a 420-amino-acid chain: Calreticulin (420 aa).

A signal peptide spans 1–25 (MAIRKGSSYAVAALLALASVAAVAG). N57 carries an N-linked (GlcNAc...) asparagine glycan. Residues Y115, K117, Y134, and D141 each contribute to the an alpha-D-glucoside site. Repeat copies occupy residues 197 to 208 (KHTGSIYEHWDI), 216 to 227 (DPEAKKPEDWDD), 233 to 244 (DPEDKKPEGYDD), 251 to 262 (DPDAKKPEDWDD), 266 to 276 (GEWTAPTIPNP), 280 to 290 (GPWKQKKIKNP), and 294 to 304 (GKWKAPMIDNP). Positions 197-262 (KHTGSIYEHW…DAKKPEDWDD (66 aa)) are 4 X approximate repeats. Basic and acidic residues predominate over residues 213-258 (KIKDPEAKKPEDWDDKEYIPDPEDKKPEGYDDIPKEIPDPDAKKPE). The disordered stretch occupies residues 213-285 (KIKDPEAKKP…PEYKGPWKQK (73 aa)). The 3 X approximate repeats stretch occupies residues 266-304 (GEWTAPTIPNPEYKGPWKQKKIKNPNYQGKWKAPMIDNP). An an alpha-D-glucoside-binding site is contributed by E324. The span at 355–381 (GKHKEAEKAAFDEAEKKKEEEDAAKGG) shows a compositional bias: basic and acidic residues. The interval 355–420 (GKHKEAEKAA…DSDDEKHDEL (66 aa)) is disordered. The segment covering 382–402 (DDEDDDLEDEEDDEKADEDKA) has biased composition (acidic residues). Positions 403–420 (DSDAEDGKDSDDEKHDEL) are enriched in basic and acidic residues. The Prevents secretion from ER signature appears at 417–420 (HDEL).

This sequence belongs to the calreticulin family.

It localises to the endoplasmic reticulum lumen. Molecular calcium-binding chaperone promoting folding, oligomeric assembly and quality control in the ER via the calreticulin/calnexin cycle. This lectin may interact transiently with almost all of the monoglucosylated glycoproteins that are synthesized in the ER. The chain is Calreticulin (CRT) from Zea mays (Maize).